The chain runs to 445 residues: Glutamate--tRNA ligase 2 (445 aa).

A 'HIGH' region motif is present at residues 10–20 (PSPTGMLHVGN). A 'KMSKS' region motif is present at residues 240 to 244 (KISKR). Lys-243 serves as a coordination point for ATP.

It belongs to the class-I aminoacyl-tRNA synthetase family. Glutamate--tRNA ligase type 1 subfamily. As to quaternary structure, monomer.

Its subcellular location is the cytoplasm. The catalysed reaction is tRNA(Glu) + L-glutamate + ATP = L-glutamyl-tRNA(Glu) + AMP + diphosphate. In terms of biological role, catalyzes the attachment of glutamate to tRNA(Glu) in a two-step reaction: glutamate is first activated by ATP to form Glu-AMP and then transferred to the acceptor end of tRNA(Glu). The chain is Glutamate--tRNA ligase 2 from Rickettsia canadensis (strain McKiel).